Here is a 368-residue protein sequence, read N- to C-terminus: (Iso)eugenol O-methyltransferase (368 aa).

The propeptide occupies 1 to 2 (MG). S-adenosyl-L-methionine contacts are provided by residues Ser-187, 211 to 212 (GG), Asp-234, 254 to 255 (DM), and Lys-268. His-272 functions as the Proton acceptor in the catalytic mechanism.

This sequence belongs to the class I-like SAM-binding methyltransferase superfamily. Cation-independent O-methyltransferase family. COMT subfamily. Homodimer. As to expression, expressed in petals, style and stamens, but not in stigma, sepals, leaves or stem tissues.

It catalyses the reaction (E)-isoeugenol + S-adenosyl-L-methionine = (E)-isomethyleugenol + S-adenosyl-L-homocysteine + H(+). Catalyzes the methylation of the para-4-hydroxyl of both eugenol and (iso)eugenol to methyleugenol and isomethyleugenol, respectively. The resulting products are part of a complex mixture of low-molecular-weight volatile compounds emitted by the flowers to attract pollinators. The protein is (Iso)eugenol O-methyltransferase (IEMT1) of Clarkia breweri (Fairy fans).